The primary structure comprises 119 residues: Large ribosomal subunit protein bL17 (119 aa).

This sequence belongs to the bacterial ribosomal protein bL17 family. In terms of assembly, part of the 50S ribosomal subunit. Contacts protein L32.

The protein is Large ribosomal subunit protein bL17 of Mesoplasma florum (strain ATCC 33453 / NBRC 100688 / NCTC 11704 / L1) (Acholeplasma florum).